A 175-amino-acid polypeptide reads, in one-letter code: Alkyl hydroperoxide reductase AhpD (175 aa).

C131 functions as the Proton donor in the catalytic mechanism. The cysteines at positions 131 and 134 are disulfide-linked. C134 functions as the Cysteine sulfenic acid (-SOH) intermediate in the catalytic mechanism.

The protein belongs to the AhpD family.

The catalysed reaction is N(6)-[(R)-dihydrolipoyl]-L-lysyl-[lipoyl-carrier protein] + a hydroperoxide = N(6)-[(R)-lipoyl]-L-lysyl-[lipoyl-carrier protein] + an alcohol + H2O. Functionally, antioxidant protein with alkyl hydroperoxidase activity. Required for the reduction of the AhpC active site cysteine residues and for the regeneration of the AhpC enzyme activity. The sequence is that of Alkyl hydroperoxide reductase AhpD from Brucella anthropi (strain ATCC 49188 / DSM 6882 / CCUG 24695 / JCM 21032 / LMG 3331 / NBRC 15819 / NCTC 12168 / Alc 37) (Ochrobactrum anthropi).